A 99-amino-acid polypeptide reads, in one-letter code: uncharacterized protein (99 aa).

This is an uncharacterized protein from Escherichia coli (strain K12).